The chain runs to 779 residues: Abnormal cell migration protein 10 (779 aa).

A compositionally biased stretch (acidic residues) spans 78 to 97 (NELEADTEEDIAETADDEES). Disordered stretches follow at residues 78 to 105 (NELEADTEEDIAETADDEESKDPVEKTE), 189 to 217 (SSSRENVKSISTLPPPPPALSYHQTPQQP), and 242 to 302 (AASS…NAEE). The span at 189–200 (SSSRENVKSIST) shows a compositional bias: polar residues. Residues 242–254 (AASSCSSPDGDSA) are compositionally biased toward low complexity. Polar residues predominate over residues 256–293 (GDSSSTESSNNRCRNSAFSSNDSCRDSLNTPSPTQVSP). The 91-residue stretch at 317-407 (EAKVTKIFVK…NKLYFMRRPD (91 aa)) folds into the Ras-associating domain. Positions 456 to 566 (PPEMEGFLYL…WLVALRIAKN (111 aa)) constitute a PH domain. 2 stretches are compositionally biased toward polar residues: residues 645–660 (SFSVNSCQQSHPSRTS) and 688–698 (RASTSSPTIPQ). The interval 645-763 (SFSVNSCQQS…SPMAPAKNDL (119 aa)) is disordered. The segment covering 708–729 (PAPPPVASVMRMPPPVTPPKPC) has biased composition (pro residues).

The protein belongs to the MRL family. As to quaternary structure, may interact (via Ras-associating and PH domains) with ced-10 (GTP-bound form).

Its subcellular location is the perikaryon. Its function is as follows. Required cell non-autonomously for proper development of the excretory canals and for the long-range anterior-posterior migrations of embryonic neurons CAN, ALM and HSN. Plays a role, probably downstream of ced-10/rac1, in orientating axonal growth of HSN and AVM neurons in response to guidance cues such as slt-1. May regulate growth cone polarization by promoting asymmetric F-actin assembly. May be involved in signal transduction during cell migration. The sequence is that of Abnormal cell migration protein 10 from Caenorhabditis elegans.